The following is a 558-amino-acid chain: Polypeptide N-acetylgalactosaminyltransferase 16 (558 aa).

Residues 1–6 (MRKIRA) lie on the Cytoplasmic side of the membrane. The chain crosses the membrane as a helical; Signal-anchor for type II membrane protein span at residues 7-26 (NAIAILTVAWILGTFYYLWQ). The Lumenal segment spans residues 27–558 (DNRAHAASSS…AQQWQLLPHT (532 aa)). Residues 34–46 (SSSGRGAQRAGGR) are compositionally biased toward low complexity. A disordered region spans residues 34 to 53 (SSSGRGAQRAGGRPEQLRED). Disulfide bonds link Cys113–Cys340, Cys331–Cys409, Cys441–Cys460, Cys486–Cys506, and Cys530–Cys543. The interval 122–227 (LPATSVIITF…VEWLQPMLQR (106 aa)) is catalytic subdomain A. Substrate-binding residues include Asp163 and Arg188. A Mn(2+)-binding site is contributed by Asp211. Residue Ser212 participates in substrate binding. Residue His213 coordinates Mn(2+). The segment at 286 to 348 (PIRTPVIAGG…PCSRVGHVFR (63 aa)) is catalytic subdomain B. Trp317 serves as a coordination point for substrate. His345 contributes to the Mn(2+) binding site. Substrate-binding residues include Arg348, His351, and Tyr353. In terms of domain architecture, Ricin B-type lectin spans 428 to 555 (KEVLPGVIKQ…DAQAQQWQLL (128 aa)).

This sequence belongs to the glycosyltransferase 2 family. GalNAc-T subfamily. Mn(2+) serves as cofactor. In the CNS, it is predominantly expressed in several distinct hypothalamic, thalamic and amygdaloid nuclei. The most abundant level of expression is in the paraventricular, ventromedial and arcuate nuclei of the hypothalamus, the anterodorsal and parafascicular nuclei of the thalamus and the central, basomedial and medial nuclei of the amygdala. Also expressed in cerebral cortex, lateral septum, habenula and hippocampus.

The protein localises to the golgi apparatus membrane. It catalyses the reaction L-seryl-[protein] + UDP-N-acetyl-alpha-D-galactosamine = a 3-O-[N-acetyl-alpha-D-galactosaminyl]-L-seryl-[protein] + UDP + H(+). The catalysed reaction is L-threonyl-[protein] + UDP-N-acetyl-alpha-D-galactosamine = a 3-O-[N-acetyl-alpha-D-galactosaminyl]-L-threonyl-[protein] + UDP + H(+). It participates in protein modification; protein glycosylation. In terms of biological role, catalyzes the initial reaction in O-linked oligosaccharide biosynthesis, the transfer of an N-acetyl-D-galactosamine residue to a serine or threonine residue on the protein receptor. In Mus musculus (Mouse), this protein is Polypeptide N-acetylgalactosaminyltransferase 16 (Galnt16).